Consider the following 194-residue polypeptide: Imidazoleglycerol-phosphate dehydratase (194 aa).

Belongs to the imidazoleglycerol-phosphate dehydratase family.

The protein resides in the cytoplasm. It carries out the reaction D-erythro-1-(imidazol-4-yl)glycerol 3-phosphate = 3-(imidazol-4-yl)-2-oxopropyl phosphate + H2O. Its pathway is amino-acid biosynthesis; L-histidine biosynthesis; L-histidine from 5-phospho-alpha-D-ribose 1-diphosphate: step 6/9. The protein is Imidazoleglycerol-phosphate dehydratase of Bacillus subtilis (strain 168).